Reading from the N-terminus, the 372-residue chain is Cytochrome b (372 aa).

The next 4 membrane-spanning stretches (helical) occupy residues 25–45 (FGSM…FLAI), 69–90 (WCLQ…YIHI), 105–125 (WMSG…GYVL), and 170–190 (FFAL…IHII). Heme b is bound by residues histidine 75 and histidine 89. Residues histidine 174 and histidine 188 each coordinate heme b. Histidine 193 is an a ubiquinone binding site. Helical transmembrane passes span 218–238 (YKDL…MSFS), 280–300 (LGGT…PFTH), 312–332 (MAQF…WAAS), and 339–358 (YITI…IINP).

The protein belongs to the cytochrome b family. In terms of assembly, the cytochrome bc1 complex contains 3 respiratory subunits (MT-CYB, CYC1 and UQCRFS1), 2 core proteins (UQCRC1 and UQCRC2) and probably 6 low-molecular weight proteins. Requires heme b as cofactor.

It localises to the mitochondrion inner membrane. In terms of biological role, component of the ubiquinol-cytochrome c reductase complex (complex III or cytochrome b-c1 complex) that is part of the mitochondrial respiratory chain. The b-c1 complex mediates electron transfer from ubiquinol to cytochrome c. Contributes to the generation of a proton gradient across the mitochondrial membrane that is then used for ATP synthesis. The chain is Cytochrome b (MT-CYB) from Acrochordus granulatus (Rasp-skinned water snake).